A 215-amino-acid polypeptide reads, in one-letter code: Vesicle-trafficking protein SEC22b-A (215 aa).

At 1-190 (MVLQTMIVRV…RSDAKYLNTR (190 aa)) the chain is on the cytoplasmic side. Residues 6-119 (MIVRVADSLP…YSFIEFDTYI (114 aa)) form the Longin domain. One can recognise a v-SNARE coiled-coil homology domain in the interval 134 to 194 (NLGNINSELH…KYLNTRSTYA (61 aa)). Residues 191-213 (STYAKVAAGAVIIITLIIYVRFW) form a helical membrane-spanning segment. Residues 214-215 (WL) lie on the Lumenal side of the membrane.

It belongs to the synaptobrevin family. Component of 2 distinct SNARE complexes.

The protein localises to the endoplasmic reticulum membrane. It is found in the endoplasmic reticulum-Golgi intermediate compartment membrane. It localises to the golgi apparatus. The protein resides in the cis-Golgi network membrane. Its subcellular location is the trans-Golgi network membrane. The protein localises to the melanosome. Its function is as follows. SNARE involved in targeting and fusion of ER-derived transport vesicles with the Golgi complex as well as Golgi-derived retrograde transport vesicles with the ER. This is Vesicle-trafficking protein SEC22b-A from Danio rerio (Zebrafish).